A 367-amino-acid chain; its full sequence is uncharacterized protein (367 aa).

This is an uncharacterized protein from Buchnera aphidicola subsp. Acyrthosiphon pisum (strain APS) (Acyrthosiphon pisum symbiotic bacterium).